Here is a 165-residue protein sequence, read N- to C-terminus: Basic transcription factor 3 (165 aa).

The region spanning 33–97 is the NAC-A/B domain; the sequence is TTDDKRLQST…PQTKKLQDIL (65 aa). A compositionally biased stretch (polar residues) spans 120–134; the sequence is QKQASGEGNAASATI. A disordered region spans residues 120 to 144; that stretch reads QKQASGEGNAASATIQEEDDDDVPE.

Belongs to the NAC-beta family. Part of the nascent polypeptide-associated complex (NAC). Interacts with EIF(ISO)4E.

The chain is Basic transcription factor 3 from Arabidopsis thaliana (Mouse-ear cress).